The primary structure comprises 120 residues: NAD(P)H-quinone oxidoreductase subunit 3, chloroplastic (120 aa).

The next 3 helical transmembrane spans lie at 9 to 29 (IFWT…WISG), 64 to 84 (MFAL…PWAM), and 88 to 108 (VLGV…VVGL).

The protein belongs to the complex I subunit 3 family. In terms of assembly, NDH is composed of at least 16 different subunits, 5 of which are encoded in the nucleus.

Its subcellular location is the plastid. The protein localises to the chloroplast thylakoid membrane. It catalyses the reaction a plastoquinone + NADH + (n+1) H(+)(in) = a plastoquinol + NAD(+) + n H(+)(out). The enzyme catalyses a plastoquinone + NADPH + (n+1) H(+)(in) = a plastoquinol + NADP(+) + n H(+)(out). NDH shuttles electrons from NAD(P)H:plastoquinone, via FMN and iron-sulfur (Fe-S) centers, to quinones in the photosynthetic chain and possibly in a chloroplast respiratory chain. The immediate electron acceptor for the enzyme in this species is believed to be plastoquinone. Couples the redox reaction to proton translocation, and thus conserves the redox energy in a proton gradient. The chain is NAD(P)H-quinone oxidoreductase subunit 3, chloroplastic from Lolium perenne (Perennial ryegrass).